The following is a 222-amino-acid chain: N-(5'-phosphoribosyl)anthranilate isomerase (222 aa).

This sequence belongs to the TrpF family.

It catalyses the reaction N-(5-phospho-beta-D-ribosyl)anthranilate = 1-(2-carboxyphenylamino)-1-deoxy-D-ribulose 5-phosphate. It functions in the pathway amino-acid biosynthesis; L-tryptophan biosynthesis; L-tryptophan from chorismate: step 3/5. The sequence is that of N-(5'-phosphoribosyl)anthranilate isomerase from Symbiobacterium thermophilum (strain DSM 24528 / JCM 14929 / IAM 14863 / T).